A 218-amino-acid polypeptide reads, in one-letter code: UPF0598 protein C8orf82 homolog (218 aa).

Belongs to the UPF0598 family.

The sequence is that of UPF0598 protein C8orf82 homolog from Bos taurus (Bovine).